The chain runs to 857 residues: Alanine--tRNA ligase (857 aa).

Zn(2+)-binding residues include His556, His560, Cys658, and His662.

Belongs to the class-II aminoacyl-tRNA synthetase family. Zn(2+) is required as a cofactor.

Its subcellular location is the cytoplasm. It carries out the reaction tRNA(Ala) + L-alanine + ATP = L-alanyl-tRNA(Ala) + AMP + diphosphate. Its function is as follows. Catalyzes the attachment of alanine to tRNA(Ala) in a two-step reaction: alanine is first activated by ATP to form Ala-AMP and then transferred to the acceptor end of tRNA(Ala). Also edits incorrectly charged Ser-tRNA(Ala) and Gly-tRNA(Ala) via its editing domain. This is Alanine--tRNA ligase from Sulfurovum sp. (strain NBC37-1).